Reading from the N-terminus, the 389-residue chain is Leucine aminopeptidase 1 (389 aa).

The N-terminal stretch at 1-18 is a signal peptide; sequence MKSSVLLSLCTAALVAGA. Positions 19-89 are excised as a propeptide; it reads AHPLEPQVVL…INANRLIEKS (71 aa). Asparagine 99, asparagine 156, and asparagine 180 each carry an N-linked (GlcNAc...) asparagine glycan. Residues histidine 188, aspartate 207, glutamate 246, and aspartate 273 each contribute to the Zn(2+) site. Cysteine 322 and cysteine 326 are oxidised to a cystine. Histidine 355 is a Zn(2+) binding site.

The protein belongs to the peptidase M28 family. M28E subfamily. As to quaternary structure, monomer. The cofactor is Zn(2+).

The protein localises to the secreted. Its function is as follows. Extracellular aminopeptidase that allows assimilation of proteinaceous substrates. The chain is Leucine aminopeptidase 1 (LAP1) from Phaeosphaeria nodorum (strain SN15 / ATCC MYA-4574 / FGSC 10173) (Glume blotch fungus).